A 95-amino-acid polypeptide reads, in one-letter code: Aspartyl/glutamyl-tRNA(Asn/Gln) amidotransferase subunit C (95 aa).

Belongs to the GatC family. As to quaternary structure, heterotrimer of A, B and C subunits.

The catalysed reaction is L-glutamyl-tRNA(Gln) + L-glutamine + ATP + H2O = L-glutaminyl-tRNA(Gln) + L-glutamate + ADP + phosphate + H(+). It carries out the reaction L-aspartyl-tRNA(Asn) + L-glutamine + ATP + H2O = L-asparaginyl-tRNA(Asn) + L-glutamate + ADP + phosphate + 2 H(+). Allows the formation of correctly charged Asn-tRNA(Asn) or Gln-tRNA(Gln) through the transamidation of misacylated Asp-tRNA(Asn) or Glu-tRNA(Gln) in organisms which lack either or both of asparaginyl-tRNA or glutaminyl-tRNA synthetases. The reaction takes place in the presence of glutamine and ATP through an activated phospho-Asp-tRNA(Asn) or phospho-Glu-tRNA(Gln). The chain is Aspartyl/glutamyl-tRNA(Asn/Gln) amidotransferase subunit C from Campylobacter lari (strain RM2100 / D67 / ATCC BAA-1060).